A 505-amino-acid polypeptide reads, in one-letter code: Ribose import ATP-binding protein RbsA 2 (505 aa).

2 ABC transporter domains span residues 13-249 and 259-503; these read LALE…VGRD and VRAG…TGRA. 45–52 contributes to the ATP binding site; it reads GENGAGKS.

The protein belongs to the ABC transporter superfamily. Ribose importer (TC 3.A.1.2.1) family. In terms of assembly, the complex is composed of an ATP-binding protein (RbsA), two transmembrane proteins (RbsC) and a solute-binding protein (RbsB).

The protein resides in the cell membrane. The catalysed reaction is D-ribose(out) + ATP + H2O = D-ribose(in) + ADP + phosphate + H(+). Functionally, part of the ABC transporter complex RbsABC involved in ribose import. Responsible for energy coupling to the transport system. This chain is Ribose import ATP-binding protein RbsA 2, found in Streptomyces avermitilis (strain ATCC 31267 / DSM 46492 / JCM 5070 / NBRC 14893 / NCIMB 12804 / NRRL 8165 / MA-4680).